Reading from the N-terminus, the 481-residue chain is Probable autolysin LytO (481 aa).

The region spanning 7–148 is the Peptidase C51 domain; the sequence is KNEFIEWLKT…AYDFPMWFIR (142 aa). A compositionally biased stretch (polar residues) spans 155 to 165; that stretch reads TAPRSVQSPTQ. The tract at residues 155–177 is disordered; sequence TAPRSVQSPTQAPKKETAKPQPK. The N-acetylmuramoyl-L-alanine amidase domain occupies 198–323; sequence SNPKGIVIHN…NEFTSTSCPH (126 aa). The SH3b domain occupies 398–466; the sequence is EESARFTNGN…YLPIRTWNGS (69 aa).

It belongs to the N-acetylmuramoyl-L-alanine amidase 2 family.

It carries out the reaction Hydrolyzes the link between N-acetylmuramoyl residues and L-amino acid residues in certain cell-wall glycopeptides.. Has weak lytic activity toward S.aureus cells. This is Probable autolysin LytO from Staphylococcus aureus (strain NCTC 8325 / PS 47).